Reading from the N-terminus, the 78-residue chain is Small acidic protein 2 (78 aa).

In terms of tissue distribution, expressed in siliques and anthers.

Its function is as follows. Mediates responses to the synthetic auxin 2,4-dichlorophenoxyacetic acid (2,4-D). Not involved in the response to indole-3-acetic acid (IAA). May interact with RUB modification-related components and may regulate the culling-ring ubiquitin E3 ligase complex (CRL) activity. This Arabidopsis thaliana (Mouse-ear cress) protein is Small acidic protein 2 (SMAP2).